A 571-amino-acid chain; its full sequence is Isocitrate dehydrogenase kinase/phosphatase 2 (571 aa).

ATP-binding positions include 313–319 (APGTPGM) and Lys-334. Asp-369 is an active-site residue.

It belongs to the AceK family.

It localises to the cytoplasm. It catalyses the reaction L-seryl-[isocitrate dehydrogenase] + ATP = O-phospho-L-seryl-[isocitrate dehydrogenase] + ADP + H(+). In terms of biological role, bifunctional enzyme which can phosphorylate or dephosphorylate isocitrate dehydrogenase (IDH) on a specific serine residue. This is a regulatory mechanism which enables bacteria to bypass the Krebs cycle via the glyoxylate shunt in response to the source of carbon. When bacteria are grown on glucose, IDH is fully active and unphosphorylated, but when grown on acetate or ethanol, the activity of IDH declines drastically concomitant with its phosphorylation. This Pseudoalteromonas translucida (strain TAC 125) protein is Isocitrate dehydrogenase kinase/phosphatase 2.